A 118-amino-acid polypeptide reads, in one-letter code: Large ribosomal subunit protein bL20 (118 aa).

The protein belongs to the bacterial ribosomal protein bL20 family.

Functionally, binds directly to 23S ribosomal RNA and is necessary for the in vitro assembly process of the 50S ribosomal subunit. It is not involved in the protein synthesizing functions of that subunit. This Trichormus variabilis (strain ATCC 29413 / PCC 7937) (Anabaena variabilis) protein is Large ribosomal subunit protein bL20.